Reading from the N-terminus, the 156-residue chain is tRNA (cytidine(34)-2'-O)-methyltransferase (156 aa).

G100, I122, and S130 together coordinate S-adenosyl-L-methionine.

This sequence belongs to the class IV-like SAM-binding methyltransferase superfamily. RNA methyltransferase TrmH family. TrmL subfamily. In terms of assembly, homodimer.

Its subcellular location is the cytoplasm. It catalyses the reaction cytidine(34) in tRNA + S-adenosyl-L-methionine = 2'-O-methylcytidine(34) in tRNA + S-adenosyl-L-homocysteine + H(+). It carries out the reaction 5-carboxymethylaminomethyluridine(34) in tRNA(Leu) + S-adenosyl-L-methionine = 5-carboxymethylaminomethyl-2'-O-methyluridine(34) in tRNA(Leu) + S-adenosyl-L-homocysteine + H(+). In terms of biological role, methylates the ribose at the nucleotide 34 wobble position in the two leucyl isoacceptors tRNA(Leu)(CmAA) and tRNA(Leu)(cmnm5UmAA). Catalyzes the methyl transfer from S-adenosyl-L-methionine to the 2'-OH of the wobble nucleotide. The sequence is that of tRNA (cytidine(34)-2'-O)-methyltransferase from Aeromonas hydrophila subsp. hydrophila (strain ATCC 7966 / DSM 30187 / BCRC 13018 / CCUG 14551 / JCM 1027 / KCTC 2358 / NCIMB 9240 / NCTC 8049).